The sequence spans 234 residues: Demethylmenaquinone methyltransferase (234 aa).

S-adenosyl-L-methionine is bound by residues Thr-62, Asp-80, 100-101 (DA), and Ser-117.

The protein belongs to the class I-like SAM-binding methyltransferase superfamily. MenG/UbiE family.

It carries out the reaction a 2-demethylmenaquinol + S-adenosyl-L-methionine = a menaquinol + S-adenosyl-L-homocysteine + H(+). It functions in the pathway quinol/quinone metabolism; menaquinone biosynthesis; menaquinol from 1,4-dihydroxy-2-naphthoate: step 2/2. Functionally, methyltransferase required for the conversion of demethylmenaquinol (DMKH2) to menaquinol (MKH2). The polypeptide is Demethylmenaquinone methyltransferase (Mycobacterium bovis (strain ATCC BAA-935 / AF2122/97)).